Here is an 87-residue protein sequence, read N- to C-terminus: Small ribosomal subunit protein eS21 (87 aa).

The protein belongs to the eukaryotic ribosomal protein eS21 family. Component of the small ribosomal subunit. Mature ribosomes consist of a small (40S) and a large (60S) subunit. The 40S subunit contains about 33 different proteins and 1 molecule of RNA (18S). The 60S subunit contains about 49 different proteins and 3 molecules of RNA (25S, 5.8S and 5S).

It is found in the cytoplasm. In terms of biological role, required for the processing of the 20S rRNA-precursor to mature 18S rRNA in a late step of the maturation of 40S ribosomal subunits. Has a physiological role leading to 18S rRNA stability. The sequence is that of Small ribosomal subunit protein eS21 (RPS21) from Candida albicans (Yeast).